A 198-amino-acid polypeptide reads, in one-letter code: Pyridoxal 5'-phosphate synthase subunit PdxT (198 aa).

Glycine 49–serine 51 contributes to the L-glutamine binding site. Cysteine 81 functions as the Nucleophile in the catalytic mechanism. L-glutamine is bound by residues arginine 113 and isoleucine 141 to arginine 142. Catalysis depends on charge relay system residues histidine 177 and glutamate 179.

It belongs to the glutaminase PdxT/SNO family. In the presence of PdxS, forms a dodecamer of heterodimers. Only shows activity in the heterodimer.

It carries out the reaction aldehydo-D-ribose 5-phosphate + D-glyceraldehyde 3-phosphate + L-glutamine = pyridoxal 5'-phosphate + L-glutamate + phosphate + 3 H2O + H(+). The catalysed reaction is L-glutamine + H2O = L-glutamate + NH4(+). The protein operates within cofactor biosynthesis; pyridoxal 5'-phosphate biosynthesis. Its function is as follows. Catalyzes the hydrolysis of glutamine to glutamate and ammonia as part of the biosynthesis of pyridoxal 5'-phosphate. The resulting ammonia molecule is channeled to the active site of PdxS. This chain is Pyridoxal 5'-phosphate synthase subunit PdxT, found in Mycobacterium leprae (strain TN).